The following is a 205-amino-acid chain: uncharacterized protein (205 aa).

This sequence to M.jannaschii MJ0638 and MJ1252 and M.tuberculosis Rv2003c.

This is an uncharacterized protein from Methanocaldococcus jannaschii (strain ATCC 43067 / DSM 2661 / JAL-1 / JCM 10045 / NBRC 100440) (Methanococcus jannaschii).